The following is a 210-amino-acid chain: 23 kDa jasmonate-induced protein (210 aa).

This sequence belongs to the jasmonate-induced protein family.

This Hordeum vulgare (Barley) protein is 23 kDa jasmonate-induced protein.